The sequence spans 549 residues: Probable protein kinase UbiB (549 aa).

A Protein kinase domain is found at 123-501; sequence DFDNTPLASA…QQKAHKSNYL (379 aa). Residues 129 to 137 and K152 contribute to the ATP site; that span reads LASASISQV. D287 acts as the Proton acceptor in catalysis. Transmembrane regions (helical) follow at residues 498–518 and 520–540; these read SNYL…LFNQ and ATLW…LLGW.

Belongs to the ABC1 family. UbiB subfamily.

It is found in the cell inner membrane. It participates in cofactor biosynthesis; ubiquinone biosynthesis [regulation]. Functionally, is probably a protein kinase regulator of UbiI activity which is involved in aerobic coenzyme Q (ubiquinone) biosynthesis. This is Probable protein kinase UbiB from Shewanella woodyi (strain ATCC 51908 / MS32).